The following is a 178-amino-acid chain: ATP synthase subunit b, chloroplastic (178 aa).

A helical transmembrane segment spans residues 34-50; that stretch reads LAILTGGIFYLGSNALS.

This sequence belongs to the ATPase B chain family. As to quaternary structure, F-type ATPases have 2 components, F(1) - the catalytic core - and F(0) - the membrane proton channel. F(1) has five subunits: alpha(3), beta(3), gamma(1), delta(1), epsilon(1). F(0) has four main subunits: a(1), b(1), b'(1) and c(10-14). The alpha and beta chains form an alternating ring which encloses part of the gamma chain. F(1) is attached to F(0) by a central stalk formed by the gamma and epsilon chains, while a peripheral stalk is formed by the delta, b and b' chains.

The protein localises to the plastid. It localises to the chloroplast thylakoid membrane. In terms of biological role, f(1)F(0) ATP synthase produces ATP from ADP in the presence of a proton or sodium gradient. F-type ATPases consist of two structural domains, F(1) containing the extramembraneous catalytic core and F(0) containing the membrane proton channel, linked together by a central stalk and a peripheral stalk. During catalysis, ATP synthesis in the catalytic domain of F(1) is coupled via a rotary mechanism of the central stalk subunits to proton translocation. Component of the F(0) channel, it forms part of the peripheral stalk, linking F(1) to F(0). The sequence is that of ATP synthase subunit b, chloroplastic from Ochrosphaera neapolitana.